A 68-amino-acid polypeptide reads, in one-letter code: Conotoxin Lt5.2 (68 aa).

The N-terminal stretch at 1 to 19 (MLCLPVFIILLLLASPAAP) is a signal peptide. Residues 20–54 (KSLETRIQNDLIRAGLTDADLKTEKGFLSGLLNVA) constitute a propeptide that is removed on maturation.

This sequence belongs to the conotoxin T superfamily. In terms of processing, contains 2 disulfide bonds that can be either 'C1-C3, C2-C4' or 'C1-C4, C2-C3', since these disulfide connectivities have been observed for conotoxins with cysteine framework V (for examples, see AC P0DQQ7 and AC P81755). Expressed by the venom duct.

The protein resides in the secreted. The chain is Conotoxin Lt5.2 from Conus litteratus (Lettered cone).